Consider the following 320-residue polypeptide: Aspartate carbamoyltransferase catalytic subunit (320 aa).

Arg68 and Thr69 together coordinate carbamoyl phosphate. Lys96 is a binding site for L-aspartate. 3 residues coordinate carbamoyl phosphate: Arg118, His148, and Gln151. Residues Arg181 and Arg236 each contribute to the L-aspartate site. The carbamoyl phosphate site is built by Gly277 and Pro278.

This sequence belongs to the aspartate/ornithine carbamoyltransferase superfamily. ATCase family. Heterododecamer (2C3:3R2) of six catalytic PyrB chains organized as two trimers (C3), and six regulatory PyrI chains organized as three dimers (R2).

It catalyses the reaction carbamoyl phosphate + L-aspartate = N-carbamoyl-L-aspartate + phosphate + H(+). The protein operates within pyrimidine metabolism; UMP biosynthesis via de novo pathway; (S)-dihydroorotate from bicarbonate: step 2/3. Its function is as follows. Catalyzes the condensation of carbamoyl phosphate and aspartate to form carbamoyl aspartate and inorganic phosphate, the committed step in the de novo pyrimidine nucleotide biosynthesis pathway. The polypeptide is Aspartate carbamoyltransferase catalytic subunit (Acidovorax ebreus (strain TPSY) (Diaphorobacter sp. (strain TPSY))).